Consider the following 214-residue polypeptide: Calcineurin B-like protein 8 (214 aa).

4 EF-hand domains span residues 35–70 (EIEA…RNGS), 71–106 (MQNL…FHPY), 108–143 (PEHE…LLGE), and 152–187 (SIEA…NPSI). Residues aspartate 165, asparagine 167, aspartate 169, lysine 171, and glutamate 176 each contribute to the Ca(2+) site. A Phosphoserine modification is found at serine 205.

The protein belongs to the calcineurin regulatory subunit family. Interacts with CIPK23. Interacts with CIPK14 at the cell membrane exclusively.

The protein resides in the cytoplasm. It is found in the nucleus. Its subcellular location is the cell membrane. In terms of biological role, acts as a calcium sensor. CBL proteins interact with CIPK serine-threonine protein kinases. Binding of a CBL protein to the regulatory NAF domain of a CIPK protein lead to the activation of the kinase in a calcium-dependent manner. The sequence is that of Calcineurin B-like protein 8 (CBL8) from Arabidopsis thaliana (Mouse-ear cress).